We begin with the raw amino-acid sequence, 432 residues long: D-amino acid dehydrogenase (432 aa).

3–17 (VVVLGSGVVGVASAW) is an FAD binding site.

Belongs to the DadA oxidoreductase family. FAD is required as a cofactor.

It carries out the reaction a D-alpha-amino acid + A + H2O = a 2-oxocarboxylate + AH2 + NH4(+). It functions in the pathway amino-acid degradation; D-alanine degradation; NH(3) and pyruvate from D-alanine: step 1/1. Oxidative deamination of D-amino acids. In Cronobacter sakazakii (strain ATCC BAA-894) (Enterobacter sakazakii), this protein is D-amino acid dehydrogenase.